The primary structure comprises 1489 residues: ZEB2-regulated ABC transporter 1 (1489 aa).

Residues M1–E55 form a disordered region. Residue N7 is glycosylated (N-linked (GlcNAc...) asparagine). A compositionally biased stretch (acidic residues) spans S44–Q53. 5 N-linked (GlcNAc...) asparagine glycosylation sites follow: N70, N73, N118, N332, and N469. The ABC transporter 1 domain maps to L152–D408. Helical transmembrane passes span L513–I533, G552–T572, I599–F619, G628–F648, and M662–V682. N-linked (GlcNAc...) asparagine glycosylation is present at N714. Residues G773–I793 form a helical membrane-spanning segment. Residues P811–N834 form a disordered region. A compositionally biased stretch (polar residues) spans E819–N834. Positions F846–G1088 constitute an ABC transporter 2 domain. Residue G882–T889 participates in ATP binding. Transmembrane regions (helical) follow at residues A1190–L1210, F1218–F1238, I1269–F1289, W1307–I1327, and A1333–A1353. An N-linked (GlcNAc...) asparagine glycan is attached at N1402. The chain crosses the membrane as a helical span at residues G1457 to I1477.

Belongs to the ABC transporter superfamily. ABCG family. PDR (TC 3.A.1.205) subfamily.

Its subcellular location is the cell membrane. The protein localises to the vacuole membrane. Functionally, ABC transporter involved in zearalenone production. The polypeptide is ZEB2-regulated ABC transporter 1 (Gibberella zeae (strain ATCC MYA-4620 / CBS 123657 / FGSC 9075 / NRRL 31084 / PH-1) (Wheat head blight fungus)).